We begin with the raw amino-acid sequence, 404 residues long: NADH-quinone oxidoreductase subunit D 2 (404 aa).

It belongs to the complex I 49 kDa subunit family. As to quaternary structure, NDH-1 is composed of 14 different subunits. Subunits NuoB, C, D, E, F, and G constitute the peripheral sector of the complex.

The protein localises to the cell inner membrane. It carries out the reaction a quinone + NADH + 5 H(+)(in) = a quinol + NAD(+) + 4 H(+)(out). In terms of biological role, NDH-1 shuttles electrons from NADH, via FMN and iron-sulfur (Fe-S) centers, to quinones in the respiratory chain. The immediate electron acceptor for the enzyme in this species is believed to be ubiquinone. Couples the redox reaction to proton translocation (for every two electrons transferred, four hydrogen ions are translocated across the cytoplasmic membrane), and thus conserves the redox energy in a proton gradient. The chain is NADH-quinone oxidoreductase subunit D 2 from Rhizobium etli (strain CIAT 652).